The following is a 276-amino-acid chain: NH(3)-dependent NAD(+) synthetase (276 aa).

ATP is bound at residue 43–50 (GISGGVDS). D49 is a binding site for Mg(2+). R146 lines the deamido-NAD(+) pocket. T166 contacts ATP. E171 provides a ligand contact to Mg(2+). Positions 179 and 186 each coordinate deamido-NAD(+). Residues K195 and T217 each contribute to the ATP site. 266–267 (HK) serves as a coordination point for deamido-NAD(+).

This sequence belongs to the NAD synthetase family. In terms of assembly, homodimer.

It carries out the reaction deamido-NAD(+) + NH4(+) + ATP = AMP + diphosphate + NAD(+) + H(+). It functions in the pathway cofactor biosynthesis; NAD(+) biosynthesis; NAD(+) from deamido-NAD(+) (ammonia route): step 1/1. Its function is as follows. Catalyzes the ATP-dependent amidation of deamido-NAD to form NAD. Uses ammonia as a nitrogen source. This chain is NH(3)-dependent NAD(+) synthetase, found in Vibrio campbellii (strain ATCC BAA-1116).